A 323-amino-acid polypeptide reads, in one-letter code: Annexin A5 (323 aa).

Annexin repeat units lie at residues 17 to 88 (FNDK…ALMV), 89 to 160 (PAHL…SLVQ), 172 to 244 (GQVE…AVVK), and 248 to 319 (SIQG…LLCG).

The protein belongs to the annexin family.

In terms of biological role, calcium/phospholipid-binding protein which promotes membrane fusion and is involved in exocytosis. This Cynops pyrrhogaster (Japanese fire-bellied newt) protein is Annexin A5.